The chain runs to 359 residues: Peptide chain release factor 1 (359 aa).

Glutamine 236 is modified (N5-methylglutamine).

This sequence belongs to the prokaryotic/mitochondrial release factor family. Post-translationally, methylated by PrmC. Methylation increases the termination efficiency of RF1.

It is found in the cytoplasm. Functionally, peptide chain release factor 1 directs the termination of translation in response to the peptide chain termination codons UAG and UAA. The protein is Peptide chain release factor 1 of Streptococcus thermophilus (strain ATCC BAA-250 / LMG 18311).